A 97-amino-acid polypeptide reads, in one-letter code: Pyrin domain-containing protein 2 (97 aa).

A Pyrin domain is found at 1–94; that stretch reads MASSAELDFN…SGRADEHCVM (94 aa).

As to quaternary structure, interacts with PYCARD/ASC (via pyrin domain). Interacts with NLRP2 (via pyrin domain). In terms of tissue distribution, predominantly expressed in peripheral blood. Weakly expressed in testis.

Its subcellular location is the cytoplasm. The protein localises to the nucleus. Functionally, may play a role in innate immunity by disrupting the interaction between PYCARD and NLRP3, thereby regulating the NLRP3 inflammasome. May also inhibit NF-kappa-B signaling distally by affecting the nuclear accumulation of RELA. This Homo sapiens (Human) protein is Pyrin domain-containing protein 2.